The sequence spans 128 residues: Ribosome-binding factor A (128 aa).

It belongs to the RbfA family. Monomer. Binds 30S ribosomal subunits, but not 50S ribosomal subunits or 70S ribosomes.

The protein localises to the cytoplasm. One of several proteins that assist in the late maturation steps of the functional core of the 30S ribosomal subunit. Associates with free 30S ribosomal subunits (but not with 30S subunits that are part of 70S ribosomes or polysomes). Required for efficient processing of 16S rRNA. May interact with the 5'-terminal helix region of 16S rRNA. This chain is Ribosome-binding factor A, found in Idiomarina loihiensis (strain ATCC BAA-735 / DSM 15497 / L2-TR).